The chain runs to 160 residues: Sulfur-rich protein (160 aa).

Helical transmembrane passes span 63–83 and 92–112; these read ITMIVLGIILLIAGLALTFVL and FLFLIPAVIGLVKLLATSVFM.

It is found in the membrane. The protein is Sulfur-rich protein (srp) of Chlamydia abortus (strain DSM 27085 / S26/3) (Chlamydophila abortus).